A 443-amino-acid chain; its full sequence is Flagellum-specific ATP synthase (443 aa).

Residue 169-176 (AGAGVGKS) coordinates ATP.

The protein belongs to the ATPase alpha/beta chains family.

It is found in the cytoplasm. The enzyme catalyses ATP + H2O + 4 H(+)(in) = ADP + phosphate + 5 H(+)(out). Probable catalytic subunit of a protein translocase for flagellum-specific export, or a proton translocase involved in local circuits at the flagellum. In Aquifex aeolicus (strain VF5), this protein is Flagellum-specific ATP synthase (fliI).